The chain runs to 1000 residues: Bifunctional glutamine synthetase adenylyltransferase/adenylyl-removing enzyme (1000 aa).

The adenylyl removase stretch occupies residues 1 to 481; sequence MTAPGRRSST…LHEKLFYRPL (481 aa). The adenylyl transferase stretch occupies residues 487–1000; sequence QLAPGEARLS…AVVDEQFYGA (514 aa).

It belongs to the GlnE family. Requires Mg(2+) as cofactor.

The catalysed reaction is [glutamine synthetase]-O(4)-(5'-adenylyl)-L-tyrosine + phosphate = [glutamine synthetase]-L-tyrosine + ADP. It carries out the reaction [glutamine synthetase]-L-tyrosine + ATP = [glutamine synthetase]-O(4)-(5'-adenylyl)-L-tyrosine + diphosphate. Its function is as follows. Involved in the regulation of glutamine synthetase GlnA, a key enzyme in the process to assimilate ammonia. When cellular nitrogen levels are high, the C-terminal adenylyl transferase (AT) inactivates GlnA by covalent transfer of an adenylyl group from ATP to specific tyrosine residue of GlnA, thus reducing its activity. Conversely, when nitrogen levels are low, the N-terminal adenylyl removase (AR) activates GlnA by removing the adenylyl group by phosphorolysis, increasing its activity. The regulatory region of GlnE binds the signal transduction protein PII (GlnB) which indicates the nitrogen status of the cell. This chain is Bifunctional glutamine synthetase adenylyltransferase/adenylyl-removing enzyme, found in Streptomyces avermitilis (strain ATCC 31267 / DSM 46492 / JCM 5070 / NBRC 14893 / NCIMB 12804 / NRRL 8165 / MA-4680).